A 239-amino-acid polypeptide reads, in one-letter code: tRNA (guanine-N(7)-)-methyltransferase (239 aa).

4 residues coordinate S-adenosyl-L-methionine: Glu69, Glu94, Asp121, and Asp144. The active site involves Asp144. Lys148 is a substrate binding site. The interaction with RNA stretch occupies residues 150–155 (RHNKRR). Substrate contacts are provided by residues Asp180 and 217 to 220 (TKFE).

It belongs to the class I-like SAM-binding methyltransferase superfamily. TrmB family. Monomer.

It catalyses the reaction guanosine(46) in tRNA + S-adenosyl-L-methionine = N(7)-methylguanosine(46) in tRNA + S-adenosyl-L-homocysteine. Its pathway is tRNA modification; N(7)-methylguanine-tRNA biosynthesis. Functionally, catalyzes the formation of N(7)-methylguanine at position 46 (m7G46) in tRNA. This chain is tRNA (guanine-N(7)-)-methyltransferase, found in Salmonella typhimurium (strain LT2 / SGSC1412 / ATCC 700720).